Reading from the N-terminus, the 319-residue chain is Sliding-clamp-loader large subunit (319 aa).

Residues 12–15 (EQKY), I24, 53–58 (GTGKTT), and R205 contribute to the ATP site.

This sequence belongs to the Tevenvirinae sliding-clamp-loader large subunit family. In terms of assembly, the sliding-clamp-loader consists of 4 large subunits and 1 small subunit. Interacts with the sliding clamp; this interaction allows the sliding-clamp-loader to open the sliding clamp. Part of the replicase complex that includes the DNA polymerase, the polymerase clamp, the clamp loader complex, the single-stranded DNA binding protein, the primase, the helicase and the helicase assembly factor.

Its function is as follows. Forms the sliding-clamp-loader together with the small subunit. Functions as an ATPase enzyme. The clamp loader holds the clamp in an open conformation and places it onto the DNA. 4 ATP molecules must bind to the sliding-clamp-loader before the latter can open the sliding clamp. ATP hydrolysis triggers the detachment of the sliding clamp from the sliding-clamp-loader, freeing the sliding clamp to track along DNA. The polypeptide is Sliding-clamp-loader large subunit (44) (Enterobacteria phage T4 (Bacteriophage T4)).